The sequence spans 429 residues: UDP-N-acetylglucosamine 1-carboxyvinyltransferase (429 aa).

22–23 (KN) serves as a coordination point for phosphoenolpyruvate. Arg-102 serves as a coordination point for UDP-N-acetyl-alpha-D-glucosamine. Cys-126 acts as the Proton donor in catalysis. Cys-126 is subject to 2-(S-cysteinyl)pyruvic acid O-phosphothioketal. UDP-N-acetyl-alpha-D-glucosamine is bound by residues 131–135 (RPVDL), Asp-316, and Ile-338.

The protein belongs to the EPSP synthase family. MurA subfamily.

It is found in the cytoplasm. The catalysed reaction is phosphoenolpyruvate + UDP-N-acetyl-alpha-D-glucosamine = UDP-N-acetyl-3-O-(1-carboxyvinyl)-alpha-D-glucosamine + phosphate. The protein operates within cell wall biogenesis; peptidoglycan biosynthesis. Functionally, cell wall formation. Adds enolpyruvyl to UDP-N-acetylglucosamine. This chain is UDP-N-acetylglucosamine 1-carboxyvinyltransferase, found in Methylorubrum populi (strain ATCC BAA-705 / NCIMB 13946 / BJ001) (Methylobacterium populi).